Here is a 255-residue protein sequence, read N- to C-terminus: MAAEIRTFSCLNDNFGYLIHDVETKATASIDAPEAGPILKALEREGWQLTDILITHHHGDHVGGVAELKHKYNCRVVAPHDKTTAIANVDLRVANADVVKVGNLLARVVETPGHTLDHISYVFDTEKTVFAADTLFSIGCGRVFEGTYPMMWDSLLKLRALPDDFKLYCGHEYTASNVKFALTVDPDNAALQARAAEVAKLRAENKPTIPSLLGDEKRANVFLRADDPSVAARLHMKGADAAAVFGELRERKNKS.

Zn(2+) is bound by residues H56, H58, D60, H61, H114, D133, and H171.

It belongs to the metallo-beta-lactamase superfamily. Glyoxalase II family. Monomer. It depends on Zn(2+) as a cofactor.

It carries out the reaction an S-(2-hydroxyacyl)glutathione + H2O = a 2-hydroxy carboxylate + glutathione + H(+). It functions in the pathway secondary metabolite metabolism; methylglyoxal degradation; (R)-lactate from methylglyoxal: step 2/2. Thiolesterase that catalyzes the hydrolysis of S-D-lactoyl-glutathione to form glutathione and D-lactic acid. The sequence is that of Hydroxyacylglutathione hydrolase from Bradyrhizobium diazoefficiens (strain JCM 10833 / BCRC 13528 / IAM 13628 / NBRC 14792 / USDA 110).